Reading from the N-terminus, the 576-residue chain is Vacuolar protein sorting-associated protein vps5 (576 aa).

Disordered regions lie at residues M1–R60 and D156–S198. T55 is modified (phosphothreonine). Residues D156–V169 are compositionally biased toward polar residues. A compositionally biased stretch (low complexity) spans S170–S181. One can recognise a PX domain in the interval T200–D317. Positions 244, 270, and 284 each coordinate a 1,2-diacyl-sn-glycero-3-phospho-(1D-myo-inositol-3-phosphate). Residue S332 is modified to Phosphoserine.

This sequence belongs to the sorting nexin family. As to quaternary structure, component of the retromer complex which consists of vps29, vps26, vps35, vps5 and vps17.

It localises to the cytoplasm. Its subcellular location is the golgi apparatus. The protein resides in the membrane. In terms of biological role, required for efficient sporulation target of PtdIns(3)P in vesicle transport required for onset of the forespore membrane formation. Plays a role in vesicular protein sorting. Required for the endosome-to-Golgi retrieval of the vacuolar protein sorting receptor pep1/vps10. Component of the membrane-associated retromer complex which is essential in endosome-to-Golgi retrograde transport. The vps29-vps26-vps35 subcomplex may be involved in cargo selection. This chain is Vacuolar protein sorting-associated protein vps5 (vps5), found in Schizosaccharomyces pombe (strain 972 / ATCC 24843) (Fission yeast).